Reading from the N-terminus, the 211-residue chain is Large ribosomal subunit protein uL3 (211 aa).

The disordered stretch occupies residues 116–142 (GTSGVMKKHGFSGNRASHGVSRNHRLG).

This sequence belongs to the universal ribosomal protein uL3 family. As to quaternary structure, part of the 50S ribosomal subunit. Forms a cluster with proteins L14 and L19.

One of the primary rRNA binding proteins, it binds directly near the 3'-end of the 23S rRNA, where it nucleates assembly of the 50S subunit. This Fusobacterium nucleatum subsp. nucleatum (strain ATCC 25586 / DSM 15643 / BCRC 10681 / CIP 101130 / JCM 8532 / KCTC 2640 / LMG 13131 / VPI 4355) protein is Large ribosomal subunit protein uL3.